A 351-amino-acid polypeptide reads, in one-letter code: Pentatricopeptide repeat-containing protein At2g40240, mitochondrial (351 aa).

The transit peptide at 1 to 27 (MSLLRRRFVKQSVNCITFLQILAERSF) directs the protein to the mitochondrion. PPR repeat units lie at residues 106–140 (RKNAYDILISRLCKLGRIDDALIVIGDMSNGRLGL), 141–175 (TPSTYHPILCSLTRKYKIEEAWRVVESMRSKSVSM), 176–210 (DVTAYNYFLTSHCYDGELESASEVMRKIEEDGNSP), 211–245 (DSRSYDALVLGACRAGKVEAAMAILRRMEEDGVTV), 246–280 (LYSTHAHVITGLVEGGYYALGLEFVMAYAGKDLRL), and 281–315 (DSESFGFLAGKLVKRKRYEEAMIVVKEMVMRGLRM).

It belongs to the PPR family. P subfamily.

It localises to the mitochondrion. This chain is Pentatricopeptide repeat-containing protein At2g40240, mitochondrial, found in Arabidopsis thaliana (Mouse-ear cress).